The following is an 81-amino-acid chain: Penaeidin-3j (81 aa).

The signal sequence occupies residues 1 to 19 (MRLVVCLVFLASFALVCQG). Gln20 is modified (pyrrolidone carboxylic acid). 3 disulfides stabilise this stretch: Cys50-Cys65, Cys54-Cys72, and Cys66-Cys73. The residue at position 80 (Ser80) is a Serine amide.

Belongs to the penaeidin family.

Its subcellular location is the cytoplasmic granule. Antibacterial and antifungal activity. Presents chitin-binding activity. The sequence is that of Penaeidin-3j from Penaeus vannamei (Whiteleg shrimp).